An 88-amino-acid polypeptide reads, in one-letter code: Small ribosomal subunit protein bS20 (88 aa).

A compositionally biased stretch (basic and acidic residues) spans 1 to 11; it reads MANIKSSEKDI. Disordered stretches follow at residues 1–31 and 69–88; these read MANIKSSEKDIRRTKRRNAANSQNRSRLRTQ and SKNADRKKSRMAKRLNSSAA.

Belongs to the bacterial ribosomal protein bS20 family.

Functionally, binds directly to 16S ribosomal RNA. The polypeptide is Small ribosomal subunit protein bS20 (Leptospira interrogans serogroup Icterohaemorrhagiae serovar copenhageni (strain Fiocruz L1-130)).